Reading from the N-terminus, the 626-residue chain is Basic helix-loop-helix ARNT-like protein 1 (626 aa).

A disordered region spans residues 1 to 58; that stretch reads MADQRMDISSTISDFMSPGPTDLLSSSLGTSGVDCNRKRKGSATDYQESMDTDKDDPH. S17 carries the post-translational modification Phosphoserine; by GSK3-beta. Residues 17-32 show a composition bias toward low complexity; the sequence is SPGPTDLLSSSLGTSG. T21 carries the post-translational modification Phosphothreonine; by GSK3-beta. The Nuclear localization signal signature appears at 36 to 41; the sequence is NRKRKG. Residues 72–125 enclose the bHLH domain; sequence NAREAHSQIEKRRRDKMNSFIDELASLVPTCNAMSRKLDKLTVLRMAVQHMKTL. Position 78 is a phosphoserine (S78). The residue at position 90 (S90) is a Phosphoserine; by CK2. The Nuclear export signal 1 motif lies at 142–152; that stretch reads LSDDELKHLIL. Residues 143-215 enclose the PAS 1 domain; that stretch reads SDDELKHLIL…EQLSSSDTAP (73 aa). K252 participates in a covalent cross-link: Glycyl lysine isopeptide (Lys-Gly) (interchain with G-Cter in SUMO2 and SUMO3). K259 is covalently cross-linked (Glycyl lysine isopeptide (Lys-Gly) (interchain with G-Cter in SUMO); alternate). K259 is covalently cross-linked (Glycyl lysine isopeptide (Lys-Gly) (interchain with G-Cter in SUMO2); alternate). The region spanning 326-396 is the PAS 2 domain; it reads PQPVNGEIRV…ECHRQVLQTR (71 aa). The Nuclear export signal 2 signature appears at 361 to 369; that stretch reads LAYLPQELL. One can recognise a PAC domain in the interval 401-444; the sequence is TNCYKFKIKDGSFITLRSRWFSFMNPWTKEVEYIVSTNTVVLAN. 2 disordered regions span residues 459 to 492 and 511 to 595; these read SPHS…RAGA and GSSP…SPSN. Residues 508–588 are interaction with CIART; that stretch reads RIRGSSPSSC…IGIDMIDNDQ (81 aa). Over residues 511-521 the composition is skewed to low complexity; sequence GSSPSSCGSSP. N6-acetyllysine is present on K538.

As to quaternary structure, component of the circadian clock oscillator which includes the CRY1/2 proteins, CLOCK or NPAS2, BMAL1 or BMAL2, CSNK1D and/or CSNK1E, TIMELESS and the PER1/2/3 proteins. Forms a heterodimer with CLOCK. The CLOCK-BMAL1 heterodimer is required for E-box-dependent transactivation, for CLOCK nuclear translocation and degradation, and, for phosphorylation of both CLOCK and BMAL1. Part of a nuclear complex which also includes RACK1 and PRKCA; RACK1 and PRKCA are recruited to the complex in a circadian manner. Interacts with NPAS2. Interacts with EZH2. Interacts with SUMO3. Interacts with SIRT1. Interacts with AHR. Interacts with ID1, ID2 and ID3. Interacts with DDX4. Interacts with OGT. Interacts with EED and SUZ12. Interacts with MTA1. Interacts with CIART. Interacts with HSP90. Interacts with KAT2B and EP300. Interacts with BHLHE40/DEC1 and BHLHE41/DEC2. Interacts with RELB and the interaction is enhanced in the presence of CLOCK. Interacts with PER1, PER2, CRY1 and CRY2 and this interaction requires a translocation to the nucleus. Interaction of the CLOCK-BMAL1 heterodimer with PER or CRY inhibits transcription activation. Interaction of the CLOCK-BMAL1 with CRY1 is independent of DNA but with PER2 is off DNA. The CLOCK-BMAL1 heterodimer interacts with GSK3B. Interacts with KDM5A. Interacts with KMT2A; in a circadian manner. Interacts with UBE3A. Interacts with PRKCG. Interacts with MAGEL2. Interacts with NCOA2. Interacts with THRAP3. The CLOCK-BMAL1 heterodimer interacts with PASD1. Interacts with PASD1. Interacts with USP9X. Interacts with PIWIL2 (via PIWI domain). Interacts with HDAC3. Interacts with HNF4A. Post-translationally, ubiquitinated, leading to its proteasomal degradation. Deubiquitinated by USP9X. O-glycosylated; contains O-GlcNAc. O-glycosylation by OGT prevents protein degradation by inhibiting ubiquitination. It also stabilizes the CLOCK-BMAL1 heterodimer thereby increasing CLOCK-BMAL1-mediated transcription of genes in the negative loop of the circadian clock such as PER1/2/3 and CRY1/2. In terms of processing, acetylated on Lys-538 by CLOCK during the repression phase of the circadian cycle. Acetylation facilitates recruitment of CRY1 protein and initiates the repression phase of the circadian cycle. Acetylated at Lys-538 by KAT5 during the activation phase of the cycle, leading to recruitment of the positive transcription elongation factor b (P-TEFb) and BRD4, followed by productive elongation of circadian transcripts. Deacetylated by SIRT1, which may result in decreased protein stability. Post-translationally, phosphorylated upon dimerization with CLOCK. Phosphorylation enhances the transcriptional activity, alters the subcellular localization and decreases the stability of the CLOCK-BMAL1 heterodimer by promoting its degradation. Phosphorylation shows circadian variations in the liver with a peak between CT10 to CT14. Phosphorylation at Ser-90 by CK2 is essential for its nuclear localization, its interaction with CLOCK and controls CLOCK nuclear entry. Dephosphorylation at Ser-78 is important for dimerization with CLOCK and transcriptional activity. Sumoylated on Lys-259 upon dimerization with CLOCK. Predominantly conjugated to poly-SUMO2/3 rather than SUMO1 and the level of these conjugates undergo rhythmic variation, peaking at CT9-CT12. Sumoylation localizes it exclusively to the PML body and promotes its ubiquitination in the PML body, ubiquitin-dependent proteasomal degradation and the transcriptional activity of the CLOCK-BMAL1 heterodimer. In terms of processing, undergoes lysosome-mediated degradation in a time-dependent manner in the liver.

The protein localises to the nucleus. It is found in the cytoplasm. The protein resides in the PML body. In terms of biological role, transcriptional activator which forms a core component of the circadian clock. The circadian clock, an internal time-keeping system, regulates various physiological processes through the generation of approximately 24 hour circadian rhythms in gene expression, which are translated into rhythms in metabolism and behavior. It is derived from the Latin roots 'circa' (about) and 'diem' (day) and acts as an important regulator of a wide array of physiological functions including metabolism, sleep, body temperature, blood pressure, endocrine, immune, cardiovascular, and renal function. Consists of two major components: the central clock, residing in the suprachiasmatic nucleus (SCN) of the brain, and the peripheral clocks that are present in nearly every tissue and organ system. Both the central and peripheral clocks can be reset by environmental cues, also known as Zeitgebers (German for 'timegivers'). The predominant Zeitgeber for the central clock is light, which is sensed by retina and signals directly to the SCN. The central clock entrains the peripheral clocks through neuronal and hormonal signals, body temperature and feeding-related cues, aligning all clocks with the external light/dark cycle. Circadian rhythms allow an organism to achieve temporal homeostasis with its environment at the molecular level by regulating gene expression to create a peak of protein expression once every 24 hours to control when a particular physiological process is most active with respect to the solar day. Transcription and translation of core clock components (CLOCK, NPAS2, BMAL1, BMAL2, PER1, PER2, PER3, CRY1 and CRY2) plays a critical role in rhythm generation, whereas delays imposed by post-translational modifications (PTMs) are important for determining the period (tau) of the rhythms (tau refers to the period of a rhythm and is the length, in time, of one complete cycle). A diurnal rhythm is synchronized with the day/night cycle, while the ultradian and infradian rhythms have a period shorter and longer than 24 hours, respectively. Disruptions in the circadian rhythms contribute to the pathology of cardiovascular diseases, cancer, metabolic syndromes and aging. A transcription/translation feedback loop (TTFL) forms the core of the molecular circadian clock mechanism. Transcription factors, CLOCK or NPAS2 and BMAL1 or BMAL2, form the positive limb of the feedback loop, act in the form of a heterodimer and activate the transcription of core clock genes and clock-controlled genes (involved in key metabolic processes), harboring E-box elements (5'-CACGTG-3') within their promoters. The core clock genes: PER1/2/3 and CRY1/2 which are transcriptional repressors form the negative limb of the feedback loop and interact with the CLOCK|NPAS2-BMAL1|BMAL2 heterodimer inhibiting its activity and thereby negatively regulating their own expression. This heterodimer also activates nuclear receptors NR1D1/2 and RORA/B/G, which form a second feedback loop and which activate and repress BMAL1 transcription, respectively. BMAL1 positively regulates myogenesis and negatively regulates adipogenesis via the transcriptional control of the genes of the canonical Wnt signaling pathway. Plays a role in normal pancreatic beta-cell function; regulates glucose-stimulated insulin secretion via the regulation of antioxidant genes NFE2L2/NRF2 and its targets SESN2, PRDX3, CCLC and CCLM. Negatively regulates the mTORC1 signaling pathway; regulates the expression of MTOR and DEPTOR. Controls diurnal oscillations of Ly6C inflammatory monocytes; rhythmic recruitment of the PRC2 complex imparts diurnal variation to chemokine expression that is necessary to sustain Ly6C monocyte rhythms. Regulates the expression of HSD3B2, STAR, PTGS2, CYP11A1, CYP19A1 and LHCGR in the ovary and also the genes involved in hair growth. Plays an important role in adult hippocampal neurogenesis by regulating the timely entry of neural stem/progenitor cells (NSPCs) into the cell cycle and the number of cell divisions that take place prior to cell-cycle exit. Regulates the circadian expression of CIART and KLF11. The CLOCK-BMAL1 heterodimer regulates the circadian expression of SERPINE1/PAI1, VWF, B3, CCRN4L/NOC, NAMPT, DBP, MYOD1, PPARGC1A, PPARGC1B, SIRT1, GYS2, F7, NGFR, GNRHR, BHLHE40/DEC1, ATF4, MTA1, KLF10 and also genes implicated in glucose and lipid metabolism. Promotes rhythmic chromatin opening, regulating the DNA accessibility of other transcription factors. The NPAS2-BMAL1 heterodimer positively regulates the expression of MAOA, F7 and LDHA and modulates the circadian rhythm of daytime contrast sensitivity by regulating the rhythmic expression of adenylate cyclase type 1 (ADCY1) in the retina. The preferred binding motif for the CLOCK-BMAL1 heterodimer is 5'-CACGTGA-3', which contains a flanking adenine nucleotide at the 3-prime end of the canonical 6-nucleotide E-box sequence. CLOCK specifically binds to the half-site 5'-CAC-3', while BMAL1 binds to the half-site 5'-GTGA-3'. The CLOCK-BMAL1 heterodimer also recognizes the non-canonical E-box motifs 5'-AACGTGA-3' and 5'-CATGTGA-3'. Essential for the rhythmic interaction of CLOCK with ASS1 and plays a critical role in positively regulating CLOCK-mediated acetylation of ASS1. Plays a role in protecting against lethal sepsis by limiting the expression of immune checkpoint protein CD274 in macrophages in a PKM2-dependent manner. Regulates the diurnal rhythms of skeletal muscle metabolism via transcriptional activation of genes promoting triglyceride synthesis (DGAT2) and metabolic efficiency (COQ10B). This is Basic helix-loop-helix ARNT-like protein 1 (BMAL1) from Mesocricetus auratus (Golden hamster).